Consider the following 331-residue polypeptide: Beta-ketoacyl-[acyl-carrier-protein] synthase III (331 aa).

Residues Cys116 and His256 contribute to the active site. Residues 257–261 (QANTR) are ACP-binding. Asn286 is a catalytic residue.

It belongs to the thiolase-like superfamily. FabH family. In terms of assembly, homodimer.

It is found in the cytoplasm. It catalyses the reaction malonyl-[ACP] + acetyl-CoA + H(+) = 3-oxobutanoyl-[ACP] + CO2 + CoA. It functions in the pathway lipid metabolism; fatty acid biosynthesis. Functionally, catalyzes the condensation reaction of fatty acid synthesis by the addition to an acyl acceptor of two carbons from malonyl-ACP. Catalyzes the first condensation reaction which initiates fatty acid synthesis and may therefore play a role in governing the total rate of fatty acid production. Possesses both acetoacetyl-ACP synthase and acetyl transacylase activities. Its substrate specificity determines the biosynthesis of branched-chain and/or straight-chain of fatty acids. This Caldanaerobacter subterraneus subsp. tengcongensis (strain DSM 15242 / JCM 11007 / NBRC 100824 / MB4) (Thermoanaerobacter tengcongensis) protein is Beta-ketoacyl-[acyl-carrier-protein] synthase III.